The following is a 226-amino-acid chain: ATP-dependent dethiobiotin synthetase BioD (226 aa).

An ATP-binding site is contributed by glycine 12–valine 17. Residue threonine 16 participates in Mg(2+) binding. Lysine 37 is an active-site residue. Residue threonine 41 participates in substrate binding. Residues aspartate 49, glutamate 108 to glycine 111, glycine 169 to serine 170, and proline 197 to glycine 199 contribute to the ATP site. Aspartate 49 and glutamate 108 together coordinate Mg(2+).

The protein belongs to the dethiobiotin synthetase family. Homodimer. Requires Mg(2+) as cofactor.

The protein resides in the cytoplasm. It catalyses the reaction (7R,8S)-7,8-diammoniononanoate + CO2 + ATP = (4R,5S)-dethiobiotin + ADP + phosphate + 3 H(+). It functions in the pathway cofactor biosynthesis; biotin biosynthesis; biotin from 7,8-diaminononanoate: step 1/2. Catalyzes a mechanistically unusual reaction, the ATP-dependent insertion of CO2 between the N7 and N8 nitrogen atoms of 7,8-diaminopelargonic acid (DAPA, also called 7,8-diammoniononanoate) to form a ureido ring. The sequence is that of ATP-dependent dethiobiotin synthetase BioD from Mycobacterium bovis (strain ATCC BAA-935 / AF2122/97).